The following is a 256-amino-acid chain: 1-(5-phosphoribosyl)-5-[(5-phosphoribosylamino)methylideneamino] imidazole-4-carboxamide isomerase (256 aa).

The active-site Proton acceptor is the aspartate 8. The active-site Proton donor is the aspartate 130.

This sequence belongs to the HisA/HisF family.

The protein resides in the cytoplasm. The enzyme catalyses 1-(5-phospho-beta-D-ribosyl)-5-[(5-phospho-beta-D-ribosylamino)methylideneamino]imidazole-4-carboxamide = 5-[(5-phospho-1-deoxy-D-ribulos-1-ylimino)methylamino]-1-(5-phospho-beta-D-ribosyl)imidazole-4-carboxamide. Its pathway is amino-acid biosynthesis; L-histidine biosynthesis; L-histidine from 5-phospho-alpha-D-ribose 1-diphosphate: step 4/9. The chain is 1-(5-phosphoribosyl)-5-[(5-phosphoribosylamino)methylideneamino] imidazole-4-carboxamide isomerase from Chlorobium phaeobacteroides (strain DSM 266 / SMG 266 / 2430).